We begin with the raw amino-acid sequence, 436 residues long: UPF0597 protein YhaM (436 aa).

Belongs to the UPF0597 family.

The protein is UPF0597 protein YhaM of Escherichia coli (strain K12 / MC4100 / BW2952).